A 211-amino-acid polypeptide reads, in one-letter code: Putative hydrolase SMU_367 (211 aa).

An N-terminal signal peptide occupies residues 1–29; sequence MKKQFLEKAVFTVAATAATVVLGNKMADA. The LysM domain maps to 30–74; sequence DTYTLQEGDSFFSVAQRYHMDAYELASMNGKDITSLILPGQTLTV. Residues 77-101 form a disordered region; sequence SAAPDNQAAAPTDTTQATTETNDAN. The span at 78–101 shows a compositional bias: low complexity; the sequence is AAPDNQAAAPTDTTQATTETNDAN. The region spanning 85 to 209 is the Peptidase C51 domain; the sequence is AAPTDTTQAT…GTPGSVSYIY (125 aa).

This chain is Putative hydrolase SMU_367, found in Streptococcus mutans serotype c (strain ATCC 700610 / UA159).